A 215-amino-acid chain; its full sequence is Uracil phosphoribosyltransferase (215 aa).

Residues R77, R102, and 129 to 137 each bind 5-phospho-alpha-D-ribose 1-diphosphate; that span reads DPMLATGGS. Residues I193 and 198–200 each bind uracil; that span reads GDA. Position 199 (D199) interacts with 5-phospho-alpha-D-ribose 1-diphosphate.

It belongs to the UPRTase family. Mg(2+) is required as a cofactor.

The catalysed reaction is UMP + diphosphate = 5-phospho-alpha-D-ribose 1-diphosphate + uracil. It functions in the pathway pyrimidine metabolism; UMP biosynthesis via salvage pathway; UMP from uracil: step 1/1. Allosterically activated by GTP. Functionally, catalyzes the conversion of uracil and 5-phospho-alpha-D-ribose 1-diphosphate (PRPP) to UMP and diphosphate. The sequence is that of Uracil phosphoribosyltransferase from Corynebacterium urealyticum (strain ATCC 43042 / DSM 7109).